A 60-amino-acid chain; its full sequence is Mastoparan (60 aa).

A signal peptide spans 1-27 (MKDTILILFTAFIALLGFFGMSAEALA). AXPX repeat units follow at residues 27 to 30 (ADPL), 31 to 34 (ADPS), 35 to 38 (AGPN), and 41 to 44 (ADPE). Residues 28-45 (DPLADPSAGPNAEADPEA) constitute a propeptide that is removed on maturation. Residue L59 is modified to Leucine amide.

It belongs to the MCD family. Mastoparan subfamily. As to expression, expressed by the venom gland.

The protein resides in the secreted. Its subcellular location is the target cell membrane. In terms of biological role, mast cell degranulating peptide. Its mast cell degranulation activity may be related to the activation of G-protein coupled receptors in mast cells as well as interaction with other proteins located in cell endosomal membranes in the mast cells. Has a membranolytic activity on human glioblastoma multiforme cells (brain tumor cells) that leads to cell necrosis. This is Mastoparan from Vespa orientalis (Oriental hornet).